Consider the following 319-residue polypeptide: Ribosomal protein uL3 glutamine methyltransferase (319 aa).

Belongs to the protein N5-glutamine methyltransferase family. PrmB subfamily.

It carries out the reaction L-glutaminyl-[ribosomal protein uL3] + S-adenosyl-L-methionine = N(5)-methyl-L-glutaminyl-[ribosomal protein uL3] + S-adenosyl-L-homocysteine + H(+). In terms of biological role, methylates large ribosomal subunit protein uL3 on a specific glutamine residue. The chain is Ribosomal protein uL3 glutamine methyltransferase from Bradyrhizobium diazoefficiens (strain JCM 10833 / BCRC 13528 / IAM 13628 / NBRC 14792 / USDA 110).